A 149-amino-acid polypeptide reads, in one-letter code: Ribosome maturation factor RimP (149 aa).

It belongs to the RimP family.

The protein localises to the cytoplasm. In terms of biological role, required for maturation of 30S ribosomal subunits. The polypeptide is Ribosome maturation factor RimP (Neisseria gonorrhoeae (strain NCCP11945)).